Reading from the N-terminus, the 425-residue chain is MNSETLFQRSKQVVPGGVHSPVRSFSSVGGTPIFFSEARGAYLKSVEGNDFIDYCLSFGPLLFGHRHPEIQEVVEDTVNKAWSFGACEPYSLELAEFITERIPWVEKIRFVNSGTEAVMSALRVARAATGRNKILKFDGCYHGHLDQLLVKSGSGLAGLSSSDSKGIGPEIIQNTLVLPLDDESKLEELFQREGSNIACLAIEPLPANYGLLPQRIEFLKKCRELTTKYGVLLLFDEVISGFRVSFQGMAGITGIIPDLVCYGKIIGGGFPVGAYAGKRELMDLVAPSGPVYQAGTLSANPIGMRAGLKTLTKAWTENPYPALESATKQLTDGILTLLSEKGDTNWEAVTFGSLFWLKGKTENPIRRIDQIPGTHKSNFATLFHKLLKQGVYLAPSGYEVGFLSTAHTNDIINLTLEKTKKALKD.

N6-(pyridoxal phosphate)lysine is present on Lys264.

Belongs to the class-III pyridoxal-phosphate-dependent aminotransferase family. HemL subfamily. Homodimer. It depends on pyridoxal 5'-phosphate as a cofactor.

The protein resides in the cytoplasm. It catalyses the reaction (S)-4-amino-5-oxopentanoate = 5-aminolevulinate. Its pathway is porphyrin-containing compound metabolism; protoporphyrin-IX biosynthesis; 5-aminolevulinate from L-glutamyl-tRNA(Glu): step 2/2. The sequence is that of Glutamate-1-semialdehyde 2,1-aminomutase from Leptospira biflexa serovar Patoc (strain Patoc 1 / Ames).